Reading from the N-terminus, the 93-residue chain is Protein IDA-LIKE 4 (93 aa).

A signal peptide spans 1-35 (MYPTRPHYWRRRLSINRPQAFLLLILCLFFIHHCD).

Expressed in mainly in buds. Lower levels in roots. Detected at the base of pedicel, in the floral and funicule abscission zones, in vascular tissues, in guard cells of young seedlings and in hydathodes.

It localises to the secreted. Its subcellular location is the extracellular space. May be involved in floral abscission. The protein is Protein IDA-LIKE 4 (IDL4) of Arabidopsis thaliana (Mouse-ear cress).